A 631-amino-acid polypeptide reads, in one-letter code: tRNA uridine 5-carboxymethylaminomethyl modification enzyme MnmG (631 aa).

13-18 (GGGHAG) is a binding site for FAD. Residue 273-287 (GPRYCPSIEDKVNRF) coordinates NAD(+).

The protein belongs to the MnmG family. Homodimer. Heterotetramer of two MnmE and two MnmG subunits. FAD serves as cofactor.

It is found in the cytoplasm. In terms of biological role, NAD-binding protein involved in the addition of a carboxymethylaminomethyl (cmnm) group at the wobble position (U34) of certain tRNAs, forming tRNA-cmnm(5)s(2)U34. In Chromohalobacter salexigens (strain ATCC BAA-138 / DSM 3043 / CIP 106854 / NCIMB 13768 / 1H11), this protein is tRNA uridine 5-carboxymethylaminomethyl modification enzyme MnmG.